Reading from the N-terminus, the 78-residue chain is Acyl carrier protein (78 aa).

Positions 2-77 (STIEERVKKI…EAIDYVTAHA (76 aa)) constitute a Carrier domain. At S37 the chain carries O-(pantetheine 4'-phosphoryl)serine.

It belongs to the acyl carrier protein (ACP) family. 4'-phosphopantetheine is transferred from CoA to a specific serine of apo-ACP by AcpS. This modification is essential for activity because fatty acids are bound in thioester linkage to the sulfhydryl of the prosthetic group.

It localises to the cytoplasm. Its pathway is lipid metabolism; fatty acid biosynthesis. In terms of biological role, carrier of the growing fatty acid chain in fatty acid biosynthesis. The chain is Acyl carrier protein from Ectopseudomonas mendocina (strain ymp) (Pseudomonas mendocina).